Here is a 323-residue protein sequence, read N- to C-terminus: Cytochrome c biogenesis protein CcsA (323 aa).

8 helical membrane passes run 17–37, 44–64, 68–88, 98–118, 143–163, 229–249, 262–279, and 291–311; these read VVSIVISIHLITLFVNQIVGF, GMIITFLCITGLLITRWFFSG, FSDLYESLIFLSWGFSIFYMV, LSTIIAPSVIFTQGFATSGLL, MILGYAALLCGSLLSVAILVI, IISLGFIFLTIGILSGAVWAN, ETWAFITWTIFAIYLHSR, and IVASIGFLIIWICYFGVNLLG.

This sequence belongs to the CcmF/CycK/Ccl1/NrfE/CcsA family. As to quaternary structure, may interact with Ccs1.

It localises to the plastid. The protein localises to the chloroplast thylakoid membrane. Its function is as follows. Required during biogenesis of c-type cytochromes (cytochrome c6 and cytochrome f) at the step of heme attachment. In Lotus japonicus (Lotus corniculatus var. japonicus), this protein is Cytochrome c biogenesis protein CcsA.